Here is a 109-residue protein sequence, read N- to C-terminus: Urocortin-2 (109 aa).

An N-terminal signal peptide occupies residues 1-22; the sequence is MTRWALVVFMVLMLDRVPGTPI. A propeptide spanning residues 23 to 67 is cleaved from the precursor; that stretch reads PTFQLLPQNYPETTPSSVSSESPSDTTTGPSASWSNSKASPYLDT. A disordered region spans residues 24-60; that stretch reads TFQLLPQNYPETTPSSVSSESPSDTTTGPSASWSNSK. A compositionally biased stretch (low complexity) spans 33–50; it reads PETTPSSVSSESPSDTTT. Residues 51 to 60 show a composition bias toward polar residues; that stretch reads GPSASWSNSK. Valine amide; partial is present on valine 106.

It belongs to the sauvagine/corticotropin-releasing factor/urotensin I family. In terms of assembly, binds with high affinity to CRF receptors 2-alpha and 2-beta. Glycosylated.

Its subcellular location is the secreted. Its function is as follows. Suppresses food intake, delays gastric emptying and decreases heat-induced edema. Might represent an endogenous ligand for maintaining homeostasis after stress. The protein is Urocortin-2 (Ucn2) of Rattus norvegicus (Rat).